The following is a 353-amino-acid chain: Probable butyrate kinase (353 aa).

The protein belongs to the acetokinase family.

It localises to the cytoplasm. The catalysed reaction is butanoate + ATP = butanoyl phosphate + ADP. This is Probable butyrate kinase from Bacteroides thetaiotaomicron (strain ATCC 29148 / DSM 2079 / JCM 5827 / CCUG 10774 / NCTC 10582 / VPI-5482 / E50).